The primary structure comprises 220 residues: Ribonuclease HII (220 aa).

The RNase H type-2 domain occupies 32-220; that stretch reads KHIAGIDEAG…FAPIKGCFDC (189 aa). A divalent metal cation contacts are provided by Asp38, Glu39, and Asp130.

This sequence belongs to the RNase HII family. Mn(2+) is required as a cofactor. Mg(2+) serves as cofactor.

It localises to the cytoplasm. The enzyme catalyses Endonucleolytic cleavage to 5'-phosphomonoester.. Its function is as follows. Endonuclease that specifically degrades the RNA of RNA-DNA hybrids. The protein is Ribonuclease HII of Brucella abortus (strain 2308).